A 1046-amino-acid polypeptide reads, in one-letter code: Phospholipase D zeta 2 (1046 aa).

The region spanning proline 45–serine 205 is the PX domain. The region spanning serine 215–cysteine 343 is the PH domain. The PLD phosphodiesterase 1 domain occupies tyrosine 472–arginine 499. Active-site residues include histidine 477, lysine 479, and aspartate 484. Residues glycine 653–proline 667 are compositionally biased toward basic and acidic residues. The tract at residues glycine 653–aspartate 677 is disordered. In terms of domain architecture, PLD phosphodiesterase 2 spans serine 847–serine 874. Residues histidine 852, lysine 854, and aspartate 859 contribute to the active site.

This sequence belongs to the phospholipase D family. PXPH-PLD subfamily. It depends on Does not require Ca(2+) or any other cation for activity. as a cofactor. Expressed in seedlings, roots, leaves, stems and flowers. Highest expression in roots. Detected only in the meristematic regions up to 4 days after germination and then at later stages in all tissues.

It carries out the reaction a 1,2-diacyl-sn-glycero-3-phosphocholine + H2O = a 1,2-diacyl-sn-glycero-3-phosphate + choline + H(+). Its function is as follows. Hydrolyzes glycerol-phospholipids at the terminal phosphodiesteric bond to generate phosphatidic acids (PA). Phosphatidylcholine-selective. Regulates vesicle trafficking and auxin responses. Required for the normal cycling of PIN-2 containing vesicles. Contributes to the supply of inorganic phosphorus for cell metabolism and diacylglycerol moieties for galactolipid synthesis in phosphorus-starved roots. Involved in root elongation during phosphate limitation. The protein is Phospholipase D zeta 2 of Arabidopsis thaliana (Mouse-ear cress).